We begin with the raw amino-acid sequence, 165 residues long: Regulator of ribonuclease activity A (165 aa).

This sequence belongs to the RraA family. In terms of assembly, homotrimer. Binds to both RNA-binding sites in the C-terminal region of Rne and to RhlB.

It is found in the cytoplasm. Its function is as follows. Globally modulates RNA abundance by binding to RNase E (Rne) and regulating its endonucleolytic activity. Can modulate Rne action in a substrate-dependent manner by altering the composition of the degradosome. Modulates RNA-binding and helicase activities of the degradosome. This is Regulator of ribonuclease activity A from Actinobacillus pleuropneumoniae serotype 7 (strain AP76).